The following is a 595-amino-acid chain: MSRVLSAVAWPYANGPRHIGHVAGFGVPSDVFSRYMRMAGHDVLMVSGSDEHGTPILIAADEAGLSPQELADRNHRIIAEDLASLGLTYDLYTRTTTRNHHAVVQELFLGVYENGYFVEQTTYGAISPSTGRTLPDRYIEGTCPICGYDGARGDQCDNCGNQLDPHDLIDPRSKINGETPEFIETQHFFLDLPALAEALGEWLDGREATGLWRPNVIRFSQNILKEIRPRAMTRDIDWGIAVPLDGWRENPTKRLYVWFDAVIGYLSASIEWARRLDEPDRWRDWWNDPDALSYYFMGKDNITFHSQIWPAELLAYSGKGAKGGTPRQYGELNLPTEVVSSEFLTMEGRKFSSSKRVVIYVRDLLSRYQPDAFRYFVAAAGPENQDSDFTWSEFVRRTNDELVAGWGNLVNRTANLIAKNFGEIPKAGELTAADQALLDSVASAFGVVGDLIGRHRQKQAIGEAMRAVAEVNKYVSDTEPWKIKDDPDRLGTILHVVAQCVADLNLILSPFLPFAANEVDRALGGSGEIAPMPRLEEVDDLDGGAPYPIITGEYSGFPAWERRPIVPGTPVSKPTPIFTKLDPSIVDEELARLES.

A 'HIGH' region motif is present at residues 11–21 (PYANGPRHIGH). Residues Cys-143, Cys-146, Cys-156, and Cys-159 each contribute to the Zn(2+) site. A 'KMSKS' region motif is present at residues 350–354 (KFSSS). Ser-353 serves as a coordination point for ATP.

Belongs to the class-I aminoacyl-tRNA synthetase family. MetG type 1 subfamily. In terms of assembly, monomer. Zn(2+) is required as a cofactor.

The protein resides in the cytoplasm. It carries out the reaction tRNA(Met) + L-methionine + ATP = L-methionyl-tRNA(Met) + AMP + diphosphate. Is required not only for elongation of protein synthesis but also for the initiation of all mRNA translation through initiator tRNA(fMet) aminoacylation. The chain is Methionine--tRNA ligase from Nocardioides sp. (strain ATCC BAA-499 / JS614).